The following is a 252-amino-acid chain: ATP synthase subunit a (252 aa).

6 helical membrane-spanning segments follow: residues Phe-29–Ile-49, Phe-87–Phe-107, Ile-117–Tyr-137, Leu-146–Ile-166, Phe-196–Ile-216, and Val-219–Leu-239.

Belongs to the ATPase A chain family. As to quaternary structure, F-type ATPases have 2 components, CF(1) - the catalytic core - and CF(0) - the membrane proton channel. CF(1) has five subunits: alpha(3), beta(3), gamma(1), delta(1), epsilon(1). CF(0) has three main subunits: a(1), b(2) and c(9-12). The alpha and beta chains form an alternating ring which encloses part of the gamma chain. CF(1) is attached to CF(0) by a central stalk formed by the gamma and epsilon chains, while a peripheral stalk is formed by the delta and b chains.

Its subcellular location is the cell inner membrane. In terms of biological role, key component of the proton channel; it plays a direct role in the translocation of protons across the membrane. The sequence is that of ATP synthase subunit a from Bartonella tribocorum (strain CIP 105476 / IBS 506).